A 78-amino-acid chain; its full sequence is UPF0291 protein ABC2165 (78 aa).

A disordered region spans residues 56-78; it reads AKGNDVTPQKLKDSKAQKHKRLH.

Belongs to the UPF0291 family.

The protein localises to the cytoplasm. The protein is UPF0291 protein ABC2165 of Shouchella clausii (strain KSM-K16) (Alkalihalobacillus clausii).